The following is a 1158-amino-acid chain: ATP-dependent helicase/deoxyribonuclease subunit B (1158 aa).

Position 8 to 15 (8 to 15 (GRAGTGKS)) interacts with ATP. [4Fe-4S] cluster-binding residues include Cys-791, Cys-1112, Cys-1115, and Cys-1121.

The protein belongs to the helicase family. AddB/RexB type 1 subfamily. In terms of assembly, heterodimer of AddA and AddB. Requires Mg(2+) as cofactor. [4Fe-4S] cluster is required as a cofactor.

In terms of biological role, the heterodimer acts as both an ATP-dependent DNA helicase and an ATP-dependent, dual-direction single-stranded exonuclease. Recognizes the chi site generating a DNA molecule suitable for the initiation of homologous recombination. The AddB subunit has 5' -&gt; 3' nuclease activity but not helicase activity. The protein is ATP-dependent helicase/deoxyribonuclease subunit B of Clostridium perfringens (strain SM101 / Type A).